Here is a 498-residue protein sequence, read N- to C-terminus: Myocyte-specific enhancer factor 2D homolog (498 aa).

The tract at residues 1-100 is interaction with hdac9; it reads MGRKKIQIQR…KGFNGCDSPE (100 aa). The MADS-box domain maps to 3-57; that stretch reads RKKIQIQRITDERNRQVTFTKRKFGLMKKAYELSVLCDCEIALIIFNHSNKLFQY. Residues 58-86 constitute a DNA-binding region (mef2-type); that stretch reads ASTDMDKVLLKYTEYNEPHESRTNADIIE. Disordered stretches follow at residues 173 to 215, 243 to 267, and 411 to 498; these read LTDP…NSNG, LGKV…NSRK, and SIKR…AWVT. Residues 412 to 424 show a composition bias toward basic and acidic residues; sequence IKREPASPNRERS. 2 stretches are compositionally biased toward polar residues: residues 425–434 and 447–457; these read TGTPLSCFSH and DSLSSNASSFE.

The protein belongs to the MEF2 family. In terms of assembly, binds DNA as a multimer, probably as a dimer. Interacts with hdac9. Restricted to the somitic mesoderm of early embryos and to the body muscle (myotomes) of the tadpole. Expressed in all tissues examined in the adult.

Its subcellular location is the nucleus. Its function is as follows. May regulate muscle-specific transcription in the embryo and may regulate transcription of a variety of cell types in the adult. It binds to the sequence 5'-CTA[TA]4TAR-3'. The sequence is that of Myocyte-specific enhancer factor 2D homolog (mef2d) from Xenopus laevis (African clawed frog).